Reading from the N-terminus, the 340-residue chain is Flap endonuclease 1 (340 aa).

The N-domain stretch occupies residues 1 to 98 (MGLNLKDLVV…AEIERRKQIK (98 aa)). Mg(2+) contacts are provided by D27, D80, E152, E154, D173, D175, and D236. Positions 116–258 (DARKYAQQTT…TALKMIKQHS (143 aa)) are I-domain.

Belongs to the XPG/RAD2 endonuclease family. FEN1 subfamily. Interacts with PCNA. PCNA stimulates the nuclease activity without altering cleavage specificity. The cofactor is Mg(2+).

Its function is as follows. Structure-specific nuclease with 5'-flap endonuclease and 5'-3' exonuclease activities involved in DNA replication and repair. During DNA replication, cleaves the 5'-overhanging flap structure that is generated by displacement synthesis when DNA polymerase encounters the 5'-end of a downstream Okazaki fragment. Binds the unpaired 3'-DNA end and kinks the DNA to facilitate 5' cleavage specificity. Cleaves one nucleotide into the double-stranded DNA from the junction in flap DNA, leaving a nick for ligation. Also involved in the base excision repair (BER) pathway. Acts as a genome stabilization factor that prevents flaps from equilibrating into structures that lead to duplications and deletions. Also possesses 5'-3' exonuclease activity on nicked or gapped double-stranded DNA. The polypeptide is Flap endonuclease 1 (Nitrosopumilus maritimus (strain SCM1)).